The sequence spans 130 residues: Small ribosomal subunit protein uS9 (130 aa).

The protein belongs to the universal ribosomal protein uS9 family.

In Chromobacterium violaceum (strain ATCC 12472 / DSM 30191 / JCM 1249 / CCUG 213 / NBRC 12614 / NCIMB 9131 / NCTC 9757 / MK), this protein is Small ribosomal subunit protein uS9.